We begin with the raw amino-acid sequence, 142 residues long: Large ribosomal subunit protein uL29 (142 aa).

The protein belongs to the universal ribosomal protein uL29 family.

The chain is Large ribosomal subunit protein uL29 (RPL35) from Theileria annulata.